Here is a 577-residue protein sequence, read N- to C-terminus: Arginine--tRNA ligase (577 aa).

The 'HIGH' region signature appears at 122–132 (PNVAKEMHVGH).

It belongs to the class-I aminoacyl-tRNA synthetase family. As to quaternary structure, monomer.

The protein localises to the cytoplasm. It carries out the reaction tRNA(Arg) + L-arginine + ATP = L-arginyl-tRNA(Arg) + AMP + diphosphate. The chain is Arginine--tRNA ligase from Vibrio vulnificus (strain YJ016).